Here is a 345-residue protein sequence, read N- to C-terminus: Esterase (345 aa).

The first 39 residues, 1–39, serve as a signal peptide directing secretion; the sequence is MSSAMRKTTNSPVVRRLTAAAVALGSCLALAGPAGSAGA. Disulfide bonds link Cys73-Cys103, Cys156-Cys180, and Cys236-Cys294.

The protein resides in the secreted. The protein is Esterase (estA) of Streptomyces scabiei.